We begin with the raw amino-acid sequence, 974 residues long: Cell division control protein 15 (974 aa).

A Protein kinase domain is found at Y25 to I272. ATP-binding positions include I31–V39 and K54. D146 acts as the Proton acceptor in catalysis. The interval C360–L702 is self association domain. Over residues S554–P563 the composition is skewed to low complexity. The interval S554–M592 is disordered. 2 positions are modified to phosphoserine: S561 and S567. Polar residues predominate over residues T564–P579. Residues T751–T974 form an auto-inhibitory domain region. T870 bears the Phosphothreonine mark. The disordered stretch occupies residues A941–T974. A compositionally biased stretch (basic and acidic residues) spans T948–D963.

This sequence belongs to the protein kinase superfamily. Ser/Thr protein kinase family. Homodimer. Interacts with TEM1. In terms of processing, phosphorylation by CDK1 reduces the binding to the mother spindle pole body. The extent of phosphorylation gradually increases during cell-cycle progression until some point during late anaphase/telophase when it is rapidly dephosphorylated by CDC14. Phosphorylation inhibits kinase activity and dephosphorylation by CDC14 activates CDC15.

The protein resides in the cytoplasm. The protein localises to the cytoskeleton. It localises to the spindle pole. Its subcellular location is the bud neck. The catalysed reaction is L-seryl-[protein] + ATP = O-phospho-L-seryl-[protein] + ADP + H(+). The enzyme catalyses L-threonyl-[protein] + ATP = O-phospho-L-threonyl-[protein] + ADP + H(+). Its activity is regulated as follows. Kinase activity is inhibited by phosphorylation and activated by dephosphorylation by CDC14. Its function is as follows. Protein kinase of the mitotic exit network (MEN) essential for late nuclear division in the mitotic cycle. Promotes mitotic exit by phosphorylating DBF2 and directly switching on DBF2 kinase activity. Involved in the localization of DBF2 and DBF20 to the neck which is necessary to undergo cytokinesis. Plays a role in segregation of chromosomes during recovery from spindle checkpoint activation. Required for spindle pole localization of CDK1 and inactivation of CDC2 kinase activity at the end of mitosis. Required for spindle disassembly after meiosis II and plays a role in spore morphogenesis. The chain is Cell division control protein 15 (CDC15) from Saccharomyces cerevisiae (strain ATCC 204508 / S288c) (Baker's yeast).